Here is a 338-residue protein sequence, read N- to C-terminus: Ketol-acid reductoisomerase (NADP(+)) (338 aa).

In terms of domain architecture, KARI N-terminal Rossmann spans 1–181 (MKVYYDKDAD…GGTKGGVIET (181 aa)). NADP(+) contacts are provided by residues 24 to 27 (YGSQ), arginine 47, and serine 52. Residue histidine 107 is part of the active site. Residue glycine 133 coordinates NADP(+). One can recognise a KARI C-terminal knotted domain in the interval 182–327 (NFREETETDL…GQLRDMMPWI (146 aa)). Aspartate 190, glutamate 194, glutamate 226, and glutamate 230 together coordinate Mg(2+). Residue serine 251 participates in substrate binding.

This sequence belongs to the ketol-acid reductoisomerase family. Requires Mg(2+) as cofactor.

It catalyses the reaction (2R)-2,3-dihydroxy-3-methylbutanoate + NADP(+) = (2S)-2-acetolactate + NADPH + H(+). The enzyme catalyses (2R,3R)-2,3-dihydroxy-3-methylpentanoate + NADP(+) = (S)-2-ethyl-2-hydroxy-3-oxobutanoate + NADPH + H(+). It participates in amino-acid biosynthesis; L-isoleucine biosynthesis; L-isoleucine from 2-oxobutanoate: step 2/4. Its pathway is amino-acid biosynthesis; L-valine biosynthesis; L-valine from pyruvate: step 2/4. Its function is as follows. Involved in the biosynthesis of branched-chain amino acids (BCAA). Catalyzes an alkyl-migration followed by a ketol-acid reduction of (S)-2-acetolactate (S2AL) to yield (R)-2,3-dihydroxy-isovalerate. In the isomerase reaction, S2AL is rearranged via a Mg-dependent methyl migration to produce 3-hydroxy-3-methyl-2-ketobutyrate (HMKB). In the reductase reaction, this 2-ketoacid undergoes a metal-dependent reduction by NADPH to yield (R)-2,3-dihydroxy-isovalerate. The chain is Ketol-acid reductoisomerase (NADP(+)) from Dechloromonas aromatica (strain RCB).